We begin with the raw amino-acid sequence, 417 residues long: Serine hydroxymethyltransferase (417 aa).

(6S)-5,6,7,8-tetrahydrofolate is bound by residues leucine 116 and 120 to 122; that span reads GHL. Residue lysine 225 is modified to N6-(pyridoxal phosphate)lysine.

It belongs to the SHMT family. Homodimer. It depends on pyridoxal 5'-phosphate as a cofactor.

Its subcellular location is the cytoplasm. The enzyme catalyses (6R)-5,10-methylene-5,6,7,8-tetrahydrofolate + glycine + H2O = (6S)-5,6,7,8-tetrahydrofolate + L-serine. The protein operates within one-carbon metabolism; tetrahydrofolate interconversion. It participates in amino-acid biosynthesis; glycine biosynthesis; glycine from L-serine: step 1/1. In terms of biological role, catalyzes the reversible interconversion of serine and glycine with tetrahydrofolate (THF) serving as the one-carbon carrier. This reaction serves as the major source of one-carbon groups required for the biosynthesis of purines, thymidylate, methionine, and other important biomolecules. Also exhibits THF-independent aldolase activity toward beta-hydroxyamino acids, producing glycine and aldehydes, via a retro-aldol mechanism. In Hydrogenobaculum sp. (strain Y04AAS1), this protein is Serine hydroxymethyltransferase.